Consider the following 256-residue polypeptide: MSLAVRVIPCLDVDGGRVVKGVNFQNLRDAGDPVELARRYDAEGADELTFLDVTASSSNRETTYDVVRRTAEQVFIPLTVGGGVRSTEDVDRLLRAGADKVSINTAAVRRPELIREIAQEFGSQVLVLSADVRRTVNGTATPSGFEITTHGGRQGTGIDAVEWVQQAEELGAGEILLNSMDADGTKSGFDLELIRAVRKAVNVPLIASGGAGAVEHFAPAVDAGANAVLAASVFHFGEITISDVKAELRAKGYPVR.

Catalysis depends on residues Asp12 and Asp131.

It belongs to the HisA/HisF family. As to quaternary structure, heterodimer of HisH and HisF.

It is found in the cytoplasm. The enzyme catalyses 5-[(5-phospho-1-deoxy-D-ribulos-1-ylimino)methylamino]-1-(5-phospho-beta-D-ribosyl)imidazole-4-carboxamide + L-glutamine = D-erythro-1-(imidazol-4-yl)glycerol 3-phosphate + 5-amino-1-(5-phospho-beta-D-ribosyl)imidazole-4-carboxamide + L-glutamate + H(+). Its pathway is amino-acid biosynthesis; L-histidine biosynthesis; L-histidine from 5-phospho-alpha-D-ribose 1-diphosphate: step 5/9. Functionally, IGPS catalyzes the conversion of PRFAR and glutamine to IGP, AICAR and glutamate. The HisF subunit catalyzes the cyclization activity that produces IGP and AICAR from PRFAR using the ammonia provided by the HisH subunit. The polypeptide is Imidazole glycerol phosphate synthase subunit HisF (Thermobifida fusca (strain YX)).